The sequence spans 365 residues: BTB/POZ and TAZ domain-containing protein 1 (365 aa).

Residues 25–96 (TDVEIITSGR…LYSPSVTENE (72 aa)) form the BTB domain. The Nuclear localization signal motif lies at 193-202 (RKKRRRRHRR). The segment at 205–304 (NLYLQLSEAM…SESCRVPLCR (100 aa)) adopts a TAZ-type zinc-finger fold. A caM-binding region spans residues 315–338 (KMVEDTKWKVLVRRVASAKAMSSL).

In terms of assembly, interacts with CUL3A. Interacts with GTE9/BET9 and GTE11/BET10 through the BTB domain. As to expression, preferentially expressed in young leaves, roots and stems.

It localises to the nucleus. It is found in the cytoplasm. It functions in the pathway protein modification; protein ubiquitination. Its function is as follows. May act as a substrate-specific adapter of an E3 ubiquitin-protein ligase complex (CUL3-RBX1-BTB) which mediates the ubiquitination and subsequent proteasomal degradation of target proteins. Also targeted for degradation by the 26S proteasome pathway. May be involved in gametophyte development. In Arabidopsis thaliana (Mouse-ear cress), this protein is BTB/POZ and TAZ domain-containing protein 1 (BT1).